The chain runs to 310 residues: Homoserine kinase (310 aa).

91-101 (PIGSGLGSSAC) serves as a coordination point for ATP.

The protein belongs to the GHMP kinase family. Homoserine kinase subfamily.

The protein localises to the cytoplasm. The catalysed reaction is L-homoserine + ATP = O-phospho-L-homoserine + ADP + H(+). The protein operates within amino-acid biosynthesis; L-threonine biosynthesis; L-threonine from L-aspartate: step 4/5. In terms of biological role, catalyzes the ATP-dependent phosphorylation of L-homoserine to L-homoserine phosphate. In Escherichia coli (strain SMS-3-5 / SECEC), this protein is Homoserine kinase.